The chain runs to 205 residues: MIIKSAKFMSSATKPGNYPPPELPEIAFAGRSNVGKSSLINSLLKRKKLVKTSSTPGRTQLLNFFEVNESLVFVDLPGYGYAKVSKEMRKKWGQMIETFITTRKTLHGVVLILDLRRIPGGQERENLAWFDLNNIPVILVATKADKFSRQRQLAQQKEMAKALGIPLDVIHVFSAKTGQGRDELWESILDLCEIDDFEQGDDDNV.

The EngB-type G domain occupies 22–194 (ELPEIAFAGR…WESILDLCEI (173 aa)). GTP is bound by residues 30-37 (GRSNVGKS), 57-61 (GRTQL), 75-78 (DLPG), 142-145 (TKAD), and 173-175 (FSA). Ser37 and Thr59 together coordinate Mg(2+).

It belongs to the TRAFAC class TrmE-Era-EngA-EngB-Septin-like GTPase superfamily. EngB GTPase family. Mg(2+) serves as cofactor.

Its function is as follows. Necessary for normal cell division and for the maintenance of normal septation. In Desulfatibacillum aliphaticivorans, this protein is Probable GTP-binding protein EngB.